Reading from the N-terminus, the 239-residue chain is MQYQNQDNFPERIEYLVDKLNGPSEFARKTGVTLSTITRWRKGEADPSRSNLVKIAEVTGVSIEWLATGKIKEEKTTEEKPAGSLVSRAFERMQAMLEEGVSMIDSYSSINVSAGFGSFNEGITQPDGQEPYSDELLTSLGVKADNCAVFWANGNSMLPTINNYDQMLVDLSRKEIQGDRIYLVQNGESVWVKRVKMEWDGISLISDNKEEYPPISITGENAQNLQIIGQVVHIGHSLI.

One can recognise an HTH cro/C1-type domain in the interval 13–66 (IEYLVDKLNGPSEFARKTGVTLSTITRWRKGEADPSRSNLVKIAEVTGVSIEWL). Residues 24-43 (SEFARKTGVTLSTITRWRKG) constitute a DNA-binding region (H-T-H motif).

This is an uncharacterized protein from Haemophilus influenzae (strain ATCC 51907 / DSM 11121 / KW20 / Rd).